The sequence spans 180 residues: Large ribosomal subunit protein uL22 (180 aa).

Positions 111 to 180 are disordered; it reads VVVESRPAKD…ETSDAKGGSD (70 aa). Residues 142 to 166 show a composition bias toward basic residues; sequence PAKKAPAKKAPAKKAPAKTAAKKTP. A compositionally biased stretch (basic and acidic residues) spans 171-180; that stretch reads ETSDAKGGSD.

This sequence belongs to the universal ribosomal protein uL22 family. In terms of assembly, part of the 50S ribosomal subunit.

In terms of biological role, this protein binds specifically to 23S rRNA; its binding is stimulated by other ribosomal proteins, e.g. L4, L17, and L20. It is important during the early stages of 50S assembly. It makes multiple contacts with different domains of the 23S rRNA in the assembled 50S subunit and ribosome. Functionally, the globular domain of the protein is located near the polypeptide exit tunnel on the outside of the subunit, while an extended beta-hairpin is found that lines the wall of the exit tunnel in the center of the 70S ribosome. The polypeptide is Large ribosomal subunit protein uL22 (Mycobacterium avium (strain 104)).